The primary structure comprises 309 residues: Ribose-phosphate pyrophosphokinase (309 aa).

ATP contacts are provided by residues 42-44 (DEE) and 102-103 (RQ). Mg(2+) contacts are provided by histidine 136 and aspartate 175. Residue lysine 199 is part of the active site. D-ribose 5-phosphate-binding positions include arginine 201, aspartate 226, and 230-234 (STGGT).

This sequence belongs to the ribose-phosphate pyrophosphokinase family. Class III (archaeal) subfamily. The cofactor is Mg(2+).

It localises to the cytoplasm. It carries out the reaction D-ribose 5-phosphate + ATP = 5-phospho-alpha-D-ribose 1-diphosphate + AMP + H(+). The protein operates within metabolic intermediate biosynthesis; 5-phospho-alpha-D-ribose 1-diphosphate biosynthesis; 5-phospho-alpha-D-ribose 1-diphosphate from D-ribose 5-phosphate (route I): step 1/1. In terms of biological role, involved in the biosynthesis of the central metabolite phospho-alpha-D-ribosyl-1-pyrophosphate (PRPP) via the transfer of pyrophosphoryl group from ATP to 1-hydroxyl of ribose-5-phosphate (Rib-5-P). This chain is Ribose-phosphate pyrophosphokinase, found in Aeropyrum pernix (strain ATCC 700893 / DSM 11879 / JCM 9820 / NBRC 100138 / K1).